A 369-amino-acid chain; its full sequence is Superinfection exclusion protein (369 aa).

The N-terminal stretch at Met-1 to Thr-15 is a signal peptide.

The protein belongs to the serpin family. Orthopoxvirus OPG040 subfamily. As to quaternary structure, interacts with A56 protein.

The protein localises to the virion membrane. It localises to the host cell membrane. Prevents cell to cell fusion via its interaction with A56 protein. The A56-K2 complex associates with components of the entry fusion complex (EFC) presumably to avoid superinfection and syncytium formation. The sequence is that of Superinfection exclusion protein (OPG040) from Vaccinia virus (strain Ankara) (VACV).